The chain runs to 665 residues: MGQIVGIDLGTTNSVVGVIEAGRPVVIANSEGTRTTPSIVGFTKNSEIVIGDQARRQLVLNPKNTFYNLKRFIGRDWDELDETSISVPYNVKSNDKGSVRILSPFTEREYAPEELISSIIRKLINDAETYLGDTIDSAVITVPAYFNESQRQATKDSAVLAGIKVDRILNEPTAAALAYGFEKSSSNNVLVFDLGGGTFDVSLLRISNGVFDVKATCGDTQLGGNNFDSKIVDWIAERFLEKHKIDLRRDRQALQRLTEAAEKAKCELSGLQKTKISLPFITTSDDGPLHIEEEFDRKLFESLSDDLLDRLLEPVQIALEDSGWDAEQIDEVVLVGGSTRIPMVQQLVKTLVPNEPCQSVNPDEVVAIGAAIQSGIISGDLRDLLLNDVTPLSLGLETIGGLMKVLIPRNTPIPVRQSDVFSTSESNQSSVVVQVRQGERPLASENKSLGKFRLSGIPPAPRGIPQVQVAFDIDANGLLEVSATDRTTGRKQTVSISGGSNLNEQEINMMIAEAKSKSTEDRIKRSVIDRKNNALTLIAQAERRLRDASLEFGPYGAERQQRAVELAIQDVEEFIDDDDPQELEISVSSLQEALFGLNRRFAAEKKVDSNPLQGIKNTFGSLKDELFSDDYWDDDPWDNQMNSNSRNSRYGNSRDDDPWDNDYFL.

Position 198 is a phosphothreonine; by autocatalysis (T198). A disordered region spans residues 634–665 (DDPWDNQMNSNSRNSRYGNSRDDDPWDNDYFL). Positions 642-651 (NSNSRNSRYG) are enriched in low complexity.

Belongs to the heat shock protein 70 family.

Functionally, acts as a chaperone. The protein is Chaperone protein dnaK1 (dnaK1) of Prochlorococcus marinus subsp. pastoris (strain CCMP1986 / NIES-2087 / MED4).